A 324-amino-acid polypeptide reads, in one-letter code: BURP domain-containing protein 5 (324 aa).

Positions 1–30 (MCATLCTLLDEISILILMLLLIQLEIRVSA) are cleaved as a signal peptide. In terms of domain architecture, BURP spans 109-323 (FFLETNLQSS…QPDVVVWTRR (215 aa)).

In terms of tissue distribution, expressed in panicles.

This Oryza sativa subsp. japonica (Rice) protein is BURP domain-containing protein 5 (BURP5).